The sequence spans 631 residues: ATP-dependent RNA helicase mrh4, mitochondrial (631 aa).

A mitochondrion-targeting transit peptide spans 1–39; the sequence is MYPLGRVSLPVRSPVCLFCQNRTSSLLPSAYVWQSARTM. Residues 55–111 are disordered; it reads PNVAKTSLKKKRNDTDRFGPFAGMNQTEARIRDDPRSRSPASLKRSKAPSDESGRKD. Residues 102–111 are compositionally biased toward basic and acidic residues; it reads APSDESGRKD. Residues 143–176 carry the Q motif motif; sequence TSFDQFPLLPVVRHSIFSQALPGLHDVTPTPIQR. Residues 181 to 200 are disordered; sequence RLLDDTNKDKKPKKRAEGEP. Positions 196-408 constitute a Helicase ATP-binding domain; the sequence is AEGEPEYDQY…RKKYPDIQRL (213 aa). 209–216 contributes to the ATP binding site; the sequence is AETGSGKT. The DEAD box motif lies at 355–358; it reads DEAD. The region spanning 442–631 is the Helicase C-terminal domain; that stretch reads DVIWSIGKAG…EGMFRGQALI (190 aa).

Belongs to the DEAD box helicase family. MRH4 subfamily.

It localises to the mitochondrion. It carries out the reaction ATP + H2O = ADP + phosphate + H(+). ATP-binding RNA helicase involved in mitochondrial RNA metabolism. Required for maintenance of mitochondrial DNA. The sequence is that of ATP-dependent RNA helicase mrh4, mitochondrial (mrh4) from Aspergillus terreus (strain NIH 2624 / FGSC A1156).